A 244-amino-acid polypeptide reads, in one-letter code: Ribonuclease PH (244 aa).

Phosphate-binding positions include Arg90 and 128–130 (GTR).

The protein belongs to the RNase PH family. Homohexameric ring arranged as a trimer of dimers.

The catalysed reaction is tRNA(n+1) + phosphate = tRNA(n) + a ribonucleoside 5'-diphosphate. Its function is as follows. Phosphorolytic 3'-5' exoribonuclease that plays an important role in tRNA 3'-end maturation. Removes nucleotide residues following the 3'-CCA terminus of tRNAs; can also add nucleotides to the ends of RNA molecules by using nucleoside diphosphates as substrates, but this may not be physiologically important. Probably plays a role in initiation of 16S rRNA degradation (leading to ribosome degradation) during starvation. This is Ribonuclease PH from Cutibacterium acnes (strain DSM 16379 / KPA171202) (Propionibacterium acnes).